A 90-amino-acid chain; its full sequence is Probable Fe(2+)-trafficking protein (90 aa).

This sequence belongs to the Fe(2+)-trafficking protein family.

Could be a mediator in iron transactions between iron acquisition and iron-requiring processes, such as synthesis and/or repair of Fe-S clusters in biosynthetic enzymes. In Nitrosococcus oceani (strain ATCC 19707 / BCRC 17464 / JCM 30415 / NCIMB 11848 / C-107), this protein is Probable Fe(2+)-trafficking protein.